The sequence spans 261 residues: Transmembrane protein 106A (261 aa).

Positions 1 to 10 (MGKAFSQLTS) are enriched in polar residues. The interval 1–22 (MGKAFSQLTSQKDEDKSILPDN) is disordered. A helical membrane pass occupies residues 93-113 (LSVFLAVTICLLIFSLTIFFL).

The protein belongs to the TMEM106 family.

It localises to the cell membrane. In terms of biological role, activates macrophages and polarizes them into M1-like macrophages through the activation of the MAPK and NF-kappaB signaling pathway. Upon activation, up-regulates the expression of CD80, CD86, CD69 and MHC II on macrophages, and induces the release of pro-inflammatory cytokines such as TNF, IL1B, IL6, CCL2 and nitric oxide. May play a role in inhibition of proliferation and migration. In Rattus norvegicus (Rat), this protein is Transmembrane protein 106A (Tmem106a).